The chain runs to 322 residues: Ribose-phosphate pyrophosphokinase (322 aa).

Residues 43 to 45 and 102 to 103 contribute to the ATP site; these read DGE and RQ. Residues His-137 and Asp-177 each coordinate Mg(2+). Residue Lys-201 is part of the active site. D-ribose 5-phosphate is bound by residues Arg-203, Asp-227, and 231-235; that span reads DTAGT.

This sequence belongs to the ribose-phosphate pyrophosphokinase family. Class I subfamily. In terms of assembly, homohexamer. The cofactor is Mg(2+).

It localises to the cytoplasm. It carries out the reaction D-ribose 5-phosphate + ATP = 5-phospho-alpha-D-ribose 1-diphosphate + AMP + H(+). It participates in metabolic intermediate biosynthesis; 5-phospho-alpha-D-ribose 1-diphosphate biosynthesis; 5-phospho-alpha-D-ribose 1-diphosphate from D-ribose 5-phosphate (route I): step 1/1. Its function is as follows. Involved in the biosynthesis of the central metabolite phospho-alpha-D-ribosyl-1-pyrophosphate (PRPP) via the transfer of pyrophosphoryl group from ATP to 1-hydroxyl of ribose-5-phosphate (Rib-5-P). In Xylella fastidiosa (strain 9a5c), this protein is Ribose-phosphate pyrophosphokinase.